The primary structure comprises 296 residues: 4-hydroxy-tetrahydrodipicolinate synthase (296 aa).

Pyruvate is bound at residue Thr-47. Tyr-135 (proton donor/acceptor) is an active-site residue. Lys-164 serves as the catalytic Schiff-base intermediate with substrate. Ile-207 contributes to the pyruvate binding site.

Belongs to the DapA family. As to quaternary structure, homotetramer; dimer of dimers.

The protein localises to the cytoplasm. The catalysed reaction is L-aspartate 4-semialdehyde + pyruvate = (2S,4S)-4-hydroxy-2,3,4,5-tetrahydrodipicolinate + H2O + H(+). The protein operates within amino-acid biosynthesis; L-lysine biosynthesis via DAP pathway; (S)-tetrahydrodipicolinate from L-aspartate: step 3/4. Functionally, catalyzes the condensation of (S)-aspartate-beta-semialdehyde [(S)-ASA] and pyruvate to 4-hydroxy-tetrahydrodipicolinate (HTPA). This Karelsulcia muelleri (strain GWSS) (Sulcia muelleri) protein is 4-hydroxy-tetrahydrodipicolinate synthase.